A 266-amino-acid polypeptide reads, in one-letter code: Enterotoxin type C-1 (266 aa).

The first 27 residues, methionine 1–alanine 27, serve as a signal peptide directing secretion. A disulfide bond links cysteine 120 and cysteine 137.

The protein belongs to the staphylococcal/streptococcal toxin family. As to quaternary structure, interacts with host MHC class II molecules composed of alpha/HLA-DRA and beta/HLA-DRB1 chains.

The protein localises to the secreted. Staphylococcal enterotoxin that activates the host immune system by binding as unprocessed molecules to major histocompatibility (MHC) complex class II and T-cell receptor (TCR) molecules. In turn, this ternary complex activates a large number of T-lymphocytes initiating a systemic release of pro-inflammatory cytokines. Inhibits SEC1-mediated T-cell activation in the absence of MHC class II by competing with SEC1 for binding to the host TCR. Also causes the intoxication staphylococcal food poisoning syndrome. This is Enterotoxin type C-1 (entC1) from Staphylococcus aureus.